Reading from the N-terminus, the 787-residue chain is GPI ethanolamine phosphate transferase 2 (787 aa).

N-linked (GlcNAc...) asparagine glycans are attached at residues N33, N185, and N397. 3 consecutive transmembrane segments (helical) span residues 400-420 (FLTY…VWNF), 426-446 (YIEH…SSFI), and 455-475 (WITI…LVVL). The N-linked (GlcNAc...) asparagine glycan is linked to N485. 2 helical membrane-spanning segments follow: residues 504-524 (HTSV…FPFL) and 536-556 (LLSV…FAIV). N581 carries an N-linked (GlcNAc...) asparagine glycan. The chain crosses the membrane as a helical span at residues 591–611 (LVPIARIFFQICGVSIIILLF). N617 carries N-linked (GlcNAc...) asparagine glycosylation. The chain crosses the membrane as a helical span at residues 629–651 (VIKFVLLLQTSSANIPLFLIFEI). The N-linked (GlcNAc...) asparagine glycan is linked to N669. Transmembrane regions (helical) follow at residues 671–693 (TFFQ…YNGV), 699–719 (IYVV…YWAL), 740–760 (GTCL…WSVF), and 767–787 (YAAW…LGVL).

This sequence belongs to the PIGG/PIGN/PIGO family. PIGG subfamily.

The protein localises to the endoplasmic reticulum membrane. The protein operates within glycolipid biosynthesis; glycosylphosphatidylinositol-anchor biosynthesis. Ethanolamine phosphate transferase involved in glycosylphosphatidylinositol-anchor biosynthesis. Transfers ethanolamine phosphate to the GPI second mannose. This chain is GPI ethanolamine phosphate transferase 2 (LAS21), found in Kluyveromyces lactis (strain ATCC 8585 / CBS 2359 / DSM 70799 / NBRC 1267 / NRRL Y-1140 / WM37) (Yeast).